A 167-amino-acid chain; its full sequence is Large ribosomal subunit protein uL10 (167 aa).

It belongs to the universal ribosomal protein uL10 family. In terms of assembly, part of the ribosomal stalk of the 50S ribosomal subunit. The N-terminus interacts with L11 and the large rRNA to form the base of the stalk. The C-terminus forms an elongated spine to which L12 dimers bind in a sequential fashion forming a multimeric L10(L12)X complex.

Its function is as follows. Forms part of the ribosomal stalk, playing a central role in the interaction of the ribosome with GTP-bound translation factors. This Streptococcus thermophilus (strain CNRZ 1066) protein is Large ribosomal subunit protein uL10.